A 272-amino-acid chain; its full sequence is Acidic leucine-rich nuclear phosphoprotein 32 family member B (272 aa).

4 LRR repeats span residues 18–38 (AVRE…EGLT), 43–64 (NLEF…PKLP), 65–87 (KLKK…AEEL), and 89–110 (SLTH…EPLK). In terms of domain architecture, LRRCT spans 123–161 (CEVTNRSDYRETVFRLLPQLSYLDGYDREDQEAPDSDVE). The segment covering 149–254 (DREDQEAPDS…DEDEDEEEEE (106 aa)) has biased composition (acidic residues). The tract at residues 149-272 (DREDQEAPDS…RETDDEGEDD (124 aa)) is disordered. Ser164 and Ser171 each carry phosphoserine. Residues 255–265 (SGKGEKRKRET) are compositionally biased toward basic and acidic residues. Residues 260 to 263 (KRKR) carry the Nuclear localization signal motif. Thr265 is modified (phosphothreonine).

It belongs to the ANP32 family. As to quaternary structure, interacts with histones H3 and H4. Interacts with KLF5; this interaction induces promoter region-specific histone incorporation and inhibition of histone acetylation by ANP32B. Post-translationally, some glutamate residues are glycylated by TTLL8. This modification occurs exclusively on glutamate residues and results in a glycine chain on the gamma-carboxyl group. In terms of processing, directly cleaved by caspase-3/CASP3.

The protein localises to the nucleus. Its function is as follows. Multifunctional protein that is involved in the regulation of many processes including cell proliferation, apoptosis, cell cycle progression or transcription. Regulates the proliferation of neuronal stem cells, differentiation of leukemic cells and progression from G1 to S phase of the cell cycle. As negative regulator of caspase-3-dependent apoptosis, may act as an antagonist of ANP32A in regulating tissue homeostasis. Exhibits histone chaperone properties, able to recruit histones to certain promoters, thus regulating the transcription of specific genes. Also plays an essential role in the nucleocytoplasmic transport of specific mRNAs via the uncommon nuclear mRNA export receptor XPO1/CRM1. Participates in the regulation of adequate adaptive immune responses by acting on mRNA expression and cell proliferation. The sequence is that of Acidic leucine-rich nuclear phosphoprotein 32 family member B (Anp32b) from Mus musculus (Mouse).